The following is a 190-amino-acid chain: Abscisic acid receptor PYL2 (190 aa).

Residues 28 to 182 (FEPDPTTCTS…NLQKLGVAAT (155 aa)) are START-like. Abscisate is bound by residues Lys64, 93–98 (ASTSTE), 120–126 (RLKNYKS), and Glu147. The short motif at 89 to 93 (SGLPA) is the Gate loop element. The Latch loop motif lies at 119–121 (HRL).

It belongs to the PYR/PYL/RCAR abscisic acid intracellular receptor family. In terms of assembly, homodimer. Binds ABA on one subunit only. Interacts with HAB1, ABI1 and ABI2, and possibly with other PP2Cs. Binds to CARs protein in an ABA-independent manner, both at the plasma membrane and in the nucleus.

The protein localises to the cytoplasm. It is found in the nucleus. The protein resides in the cell membrane. Functionally, receptor for abscisic acid (ABA) required for ABA-mediated responses such as stomatal closure and germination inhibition. Inhibits the activity of group-A protein phosphatases type 2C (PP2Cs) when activated by ABA. Can be activated by both (-)-ABA and (+)-ABA. The protein is Abscisic acid receptor PYL2 (PYL2) of Arabidopsis thaliana (Mouse-ear cress).